The chain runs to 177 residues: MYKVLLIRLTNLDNLIVNSVRTHLMNMGFEVEVNEEIFHLNAELFNWERWQYNADKLLQLVKLTFERYPYDAVIGIGEADGFSDGLNFVFGLSTKKYGLVFLSRLKEEFYGRVINSSLYIERTLKEVTHELGHTLGLGHCNNKECVMNFSVSVEDVDKKGKYFCTSCSDKLNINNKS.

His129 is a Zn(2+) binding site. The Proton acceptor role is filled by Glu130. Zn(2+) contacts are provided by His133, His139, Cys140, Cys145, Cys164, and Cys167.

It belongs to the peptidase M54 family. In terms of assembly, monomer. It depends on Zn(2+) as a cofactor.

Its function is as follows. Probable zinc metalloprotease whose natural substrate is unknown. The chain is Archaemetzincin from Sulfolobus acidocaldarius (strain ATCC 33909 / DSM 639 / JCM 8929 / NBRC 15157 / NCIMB 11770).